The primary structure comprises 123 residues: ATP synthase epsilon chain (123 aa).

It belongs to the ATPase epsilon chain family. As to quaternary structure, F-type ATPases have 2 components, CF(1) - the catalytic core - and CF(0) - the membrane proton channel. CF(1) has five subunits: alpha(3), beta(3), gamma(1), delta(1), epsilon(1). CF(0) has three main subunits: a, b and c.

It localises to the cell inner membrane. In terms of biological role, produces ATP from ADP in the presence of a proton gradient across the membrane. In Helicobacter pylori (strain G27), this protein is ATP synthase epsilon chain.